The chain runs to 394 residues: Flap endonuclease 1 (394 aa).

An N-domain region spans residues 1–104; it reads MGIKQLFTII…GELARRYQRK (104 aa). Asp-34 lines the Mg(2+) pocket. 2 residues coordinate DNA: Arg-47 and Arg-70. Mg(2+)-binding residues include Asp-86, Glu-158, Glu-160, Asp-179, and Asp-181. The segment at 122-253 is I-domain; that stretch reads DVEKFSRRTV…STALKLIREH (132 aa). Glu-158 contributes to the DNA binding site. Residues Gly-231 and Asp-233 each contribute to the DNA site. Position 233 (Asp-233) interacts with Mg(2+). Positions 340 to 348 are interaction with PCNA; the sequence is QQQRLEGFF. The segment at 358-394 is disordered; the sequence is QKAHKRKLEVKAEEAKKKLKAEKKEKAKAKARPRGTA. A compositionally biased stretch (basic residues) spans 374 to 394; that stretch reads KKLKAEKKEKAKAKARPRGTA.

Belongs to the XPG/RAD2 endonuclease family. FEN1 subfamily. Interacts with PCNA. Three molecules of FEN1 bind to one PCNA trimer with each molecule binding to one PCNA monomer. PCNA stimulates the nuclease activity without altering cleavage specificity. Requires Mg(2+) as cofactor. Phosphorylated. Phosphorylation upon DNA damage induces relocalization to the nuclear plasma.

The protein resides in the nucleus. Its subcellular location is the nucleolus. It localises to the nucleoplasm. It is found in the mitochondrion. Its function is as follows. Structure-specific nuclease with 5'-flap endonuclease and 5'-3' exonuclease activities involved in DNA replication and repair. During DNA replication, cleaves the 5'-overhanging flap structure that is generated by displacement synthesis when DNA polymerase encounters the 5'-end of a downstream Okazaki fragment. It enters the flap from the 5'-end and then tracks to cleave the flap base, leaving a nick for ligation. Also involved in the long patch base excision repair (LP-BER) pathway, by cleaving within the apurinic/apyrimidinic (AP) site-terminated flap. Acts as a genome stabilization factor that prevents flaps from equilibrating into structures that lead to duplications and deletions. Also possesses 5'-3' exonuclease activity on nicked or gapped double-stranded DNA, and exhibits RNase H activity. Also involved in replication and repair of rDNA and in repairing mitochondrial DNA. This is Flap endonuclease 1 from Pyricularia oryzae (strain 70-15 / ATCC MYA-4617 / FGSC 8958) (Rice blast fungus).